A 172-amino-acid chain; its full sequence is Podoplanin (172 aa).

A signal peptide spans methionine 1–glycine 22. Topologically, residues glycine 23–leucine 141 are extracellular. O-linked (GalNAc...) threonine glycans are attached at residues threonine 37, threonine 51, threonine 52, threonine 53, and threonine 56. The segment at lysine 49–lysine 132 is disordered. Residues threonine 51 to threonine 63 show a composition bias toward polar residues. Asparagine 60 is a glycosylation site (N-linked (GlcNAc...) asparagine). Residues threonine 63, threonine 71, and threonine 77 are each glycosylated (O-linked (GalNAc...) threonine). Residues glutamine 72 to leucine 81 are compositionally biased toward basic and acidic residues. The O-linked (GalNAc...) serine glycan is linked to serine 85. O-linked (GalNAc...) threonine glycosylation is present at threonine 86. Residue serine 87 is glycosylated (O-linked (GalNAc...) serine). A glycan (O-linked (GalNAc...) threonine) is linked at threonine 89. Residue serine 90 is glycosylated (O-linked (GalNAc...) serine). Positions serine 90–serine 99 are enriched in basic and acidic residues. 5 O-linked (GalNAc...) threonine glycosylation sites follow: threonine 100, threonine 101, threonine 102, threonine 107, and threonine 115. The segment covering threonine 100–histidine 109 has biased composition (low complexity). The segment covering serine 110–lysine 132 has biased composition (basic and acidic residues). The helical transmembrane segment at valine 142–valine 162 threads the bilayer. Residues glycine 143–glycine 147 are requires for dimerization and lipidd rafts association. The Cytoplasmic segment spans residues methionine 163 to proline 172. Positions lysine 164–lysine 165 are requires for interaction with MSN and EZR.

The protein belongs to the podoplanin family. Homodimer. Interacts with CLEC1B; the interaction is independent of CLEC1B glycosylation and activates CLEC1B; the interaction is dependent of sialic acid on O-glycans. Interacts with CD9; this interaction is homophilic and attenuates platelet aggregation and pulmonary metastasis induced by PDPN. Interacts with LGALS8; the interaction is glycosylation-dependent; may participate in connection of the lymphatic endothelium to the surrounding extracellular matrix. Interacts with HSPA9. Interacts (via extracellular domain) with CD44; this interaction is required for PDPN-mediated directional migration and regulation of lamellipodia extension/stabilization during cell spreading and migration. Interacts (via cytoplasmic domain) with MSN and EZR; activates RHOA and promotes epithelial-mesenchymal transition. Interacts with CCL21; relocalized PDPN to the basolateral membrane. Extensively O-glycosylated. Contains sialic acid residues. O-glycosylation is necessary for platelet aggregation activity. Disialylated at Thr-52; sialic acid is critical for platelet-aggregating activity and for CLEC1B interaction. Post-translationally, phosphorylated by PKA; decreases cell migration. In terms of processing, the N-terminus is blocked. As to expression, detected at high levels in lung and brain, at lower levels in kidney, stomach, liver, spleen and esophagus, and not detected in skin and small intestine. Expressed in epithelial cells of choroid plexus, ependyma, glomerulus and alveolus, in mesothelial cells and in endothelia of lymphatic vessels. Also expressed in stromal cells of peripheral lymphoid tissue and thymic epithelial cells. Detected in carcinoma cell lines and cultured fibroblasts. Expressed at higher levels in colon carcinomas than in normal colon tissue.

The protein resides in the membrane. It is found in the cell projection. The protein localises to the lamellipodium membrane. Its subcellular location is the filopodium membrane. It localises to the microvillus membrane. The protein resides in the ruffle membrane. It is found in the membrane raft. The protein localises to the apical cell membrane. Its subcellular location is the basolateral cell membrane. It localises to the invadopodium. Functionally, mediates effects on cell migration and adhesion through its different partners. During development plays a role in blood and lymphatic vessels separation by binding CLEC1B, triggering CLEC1B activation in platelets and leading to platelet activation and/or aggregation. Interaction with CD9, on the contrary, attenuates platelet aggregation and pulmonary metastasis induced by PDPN. Mediates effects on cell migration and adhesion through its different partners. Through MSN or EZR interaction promotes epithelial-mesenchymal transition (EMT) leading to ERZ phosphorylation and triggering RHOA activation leading to cell migration increase and invasiveness. Interaction with CD44 promotes directional cell migration in epithelial and tumor cells. In lymph nodes (LNs), controls fibroblastic reticular cells (FRCs) adhesion to the extracellular matrix (ECM) and contraction of the actomyosin by maintaining ERM proteins (EZR; MSN and RDX) and MYL9 activation through association with unknown transmembrane proteins. Engagement of CLEC1B by PDPN promotes FRCs relaxation by blocking lateral membrane interactions leading to reduction of ERM proteins (EZR; MSN and RDX) and MYL9 activation. Through binding with LGALS8 may participate in connection of the lymphatic endothelium to the surrounding extracellular matrix. In keratinocytes, induces changes in cell morphology showing an elongated shape, numerous membrane protrusions, major reorganization of the actin cytoskeleton, increased motility and decreased cell adhesion. Controls invadopodia stability and maturation leading to efficient degradation of the extracellular matrix (ECM) in tumor cells through modulation of RHOC activity in order to activate ROCK1/ROCK2 and LIMK1/LIMK2 and inactivation of CFL1. Required for normal lung cell proliferation and alveolus formation at birth. Does not function as a water channel or as a regulator of aquaporin-type water channels. Does not have any effect on folic acid or amino acid transport. This is Podoplanin from Mus musculus (Mouse).